We begin with the raw amino-acid sequence, 278 residues long: Ribosomal RNA small subunit methyltransferase A (278 aa).

S-adenosyl-L-methionine contacts are provided by Asn18, Leu20, Gly45, Glu66, Asp89, and Asn110.

The protein belongs to the class I-like SAM-binding methyltransferase superfamily. rRNA adenine N(6)-methyltransferase family. RsmA subfamily.

It localises to the cytoplasm. It carries out the reaction adenosine(1518)/adenosine(1519) in 16S rRNA + 4 S-adenosyl-L-methionine = N(6)-dimethyladenosine(1518)/N(6)-dimethyladenosine(1519) in 16S rRNA + 4 S-adenosyl-L-homocysteine + 4 H(+). Specifically dimethylates two adjacent adenosines (A1518 and A1519) in the loop of a conserved hairpin near the 3'-end of 16S rRNA in the 30S particle. May play a critical role in biogenesis of 30S subunits. The polypeptide is Ribosomal RNA small subunit methyltransferase A (Cupriavidus metallidurans (strain ATCC 43123 / DSM 2839 / NBRC 102507 / CH34) (Ralstonia metallidurans)).